The chain runs to 178 residues: MASISSSVATVSRTAPAQANMVAPFTGLKSNAAFPTTKKANDFSTLPSNGGRVQCMKVWPPLGLKKYETLSYLPPLTETQLAKEVDYLLRKKWVPCLEFELEHGFVYRENARSPGYYDGRYWTMWKLPMFGCTDSAQVMKELAECKKEYPQAWIRIIGFDNVRQVQCIMFIASRPDGY.

A chloroplast-targeting transit peptide spans 1-54; sequence MASISSSVATVSRTAPAQANMVAPFTGLKSNAAFPTTKKANDFSTLPSNGGRVQ.

Belongs to the RuBisCO small chain family. Heterohexadecamer of 8 large and 8 small subunits.

It localises to the plastid. The protein resides in the chloroplast. Functionally, ruBisCO catalyzes two reactions: the carboxylation of D-ribulose 1,5-bisphosphate, the primary event in carbon dioxide fixation, as well as the oxidative fragmentation of the pentose substrate. Both reactions occur simultaneously and in competition at the same active site. Although the small subunit is not catalytic it is essential for maximal activity. The sequence is that of Ribulose bisphosphate carboxylase small subunit, chloroplastic from Helianthus annuus (Common sunflower).